The chain runs to 253 residues: CD151 antigen (253 aa).

The Cytoplasmic segment spans residues 1-18 (MGEFNEKKTTCGTVCLKY). 2 S-palmitoyl cysteine lipidation sites follow: cysteine 11 and cysteine 15. The helical transmembrane segment at 19–39 (LLFTYNCCFWLAGLAVMAVGI) threads the bilayer. The Extracellular segment spans residues 40-57 (WTLALKSDYISLLASGTY). The chain crosses the membrane as a helical span at residues 58-78 (LATAYILVVAGTVVMVTGVLG). At 79-91 (CCATFKERRNLLR) the chain is on the cytoplasmic side. The chain crosses the membrane as a helical span at residues 92 to 112 (LYFILLLIIFLLEIIAGILAY). Over 113 to 221 (AYYQQLNTEL…LETFIQEHLR (109 aa)) the chain is Extracellular. N-linked (GlcNAc...) asparagine glycosylation occurs at asparagine 159. A helical transmembrane segment spans residues 222–242 (VIGAVGIGIACVQVFGMIFTC). 2 S-palmitoyl cysteine lipidation sites follow: cysteine 242 and cysteine 243. The Cytoplasmic segment spans residues 243–253 (CLYRSLKLEHY).

The protein belongs to the tetraspanin (TM4SF) family. Interacts with integrins ITGA3:ITGB1, ITGA5:ITGB1, ITGA3:ITGB1 and ITGA6:ITGB4 and with CD9 and CD181. Interacts (via the second extracellular domain) with integrin ITGAV:ITGB3. Interacts with ITGA3; this interaction modulates ITGA3 glycosylation pattern. Interacts with F11R. Interacts with RAC1 and CDC42; these interactions mediate physical association of RAC1 and CDC42 with integrin adhesion receptor complexes. Post-translationally, palmitoylated. Palmitoylation by ZDHHC2 regulates CD151 expression, association with other tetraspanin family proteins and function in cell adhesion. Ubiquitinated by RNF128 on lysine residues present in the tetraspanin amino terminus via 'Lys-48'-linked ubiquitin leading to proteasomal degradation. Expressed in a variety of tissues including vascular endothelium and epidermis. Expressed on erythroid cells, with a higher level of expression in erythroid precursors than on mature erythrocytes. Acts as a sensitive T-cell activation marker.

It is found in the cell membrane. Its function is as follows. Structural component of specialized membrane microdomains known as tetraspanin-enriched microdomains (TERMs), which act as platforms for receptor clustering and signaling. Plays a role in various cellular and molecular mechanism through its association with both integrin and non-integrin proteins. These interactions facilitate critical cellular functions, including cell-to-cell communication, wound healing, platelet aggregation, trafficking, cell motility, and angiogenesis. Via interaction with JAM-A/F11R and integrin ITGA3:ITGB1, promotes the recruitment of signaling molecules such as RAC1, CDC42 and RhoGTPases to facilitate the polarization of epithelial cells and the reorganization of the actin cytoskeleton, which are critical steps in cell migration process. Regulates the glycosylation pattern of ITGA3:ITGB1 thereby modulating its activity. Plays an essential role in the maintenance of central laminin-binding integrin ITGA6:ITGB4-containing adhesion complexes. Essential for the proper assembly of the glomerular and tubular basement membranes in kidney. Contributes to T-cell activation by modulating integrin signaling leading to activation of downstream targets PTK2 and MAPK1/MAPK3. (Microbial infection) Plays a role in human papillomavirus 16/HPV-16 endocytosis upon binding to cell surface receptor. Functionally, (Microbial infection) Plays a role in human cytomegalovirus entry into host cell by contributing to entry receptor binding, membrane fusion, or release of the capsid. This Homo sapiens (Human) protein is CD151 antigen (CD151).